The sequence spans 522 residues: Occludin (522 aa).

The segment at 1 to 20 is disordered; sequence MSSRPLESPPPYRPDEFKPN. The Cytoplasmic portion of the chain corresponds to 1-66; the sequence is MSSRPLESPP…KWTSPPGVIR (66 aa). The 210-residue stretch at 60 to 269 folds into the MARVEL domain; sequence SPPGVIRILS…IIFFAVKTRR (210 aa). A helical transmembrane segment spans residues 67 to 89; that stretch reads ILSMLIIVMCIAIFACVASTLAW. The Extracellular segment spans residues 90 to 135; the sequence is DRGYGTSLLGGSVGYPYGGSGFGSYGSGYGYGYGYGYGYGGYTDPR. Residues 136–160 form a helical membrane-spanning segment; the sequence is AAKGFMLAMAAFCFIAALVIFVTSV. The Cytoplasmic portion of the chain corresponds to 161–170; sequence IRSEMSRTRR. Residues 171-195 traverse the membrane as a helical segment; sequence YYLSVIIVSAILGIMVFIATIVYIM. Residues 196–243 lie on the Extracellular side of the membrane; the sequence is GVNPTAQSSGSLYGSQIYALCNQFYTPAATGLYVDQYLYHYCVVDPQE. An intrachain disulfide couples Cys216 to Cys237. Residues 244–265 traverse the membrane as a helical segment; that stretch reads AIAIVLGFMIIVAFALIIFFAV. Over 266–522 the chain is Cytoplasmic; sequence KTRRKMDRYD…MVGDYDRQKT (257 aa). Position 302 is a phosphoserine (Ser302). At Thr305 the chain carries Phosphothreonine. Phosphoserine is present on residues Ser313, Ser321, and Ser340. Residues 360 to 407 are disordered; it reads VDDFRQPRYSSGGNFETPSKRAPAKGRAGRSKRTEQDHYETDYTTGGE. Over residues 367 to 376 the composition is skewed to polar residues; that stretch reads RYSSGGNFET. Tyr368 is modified (phosphotyrosine). Residues Ser369 and Ser370 each carry the phosphoserine modification. Positions 381–390 are enriched in basic residues; that stretch reads APAKGRAGRS. The span at 391–400 shows a compositional bias: basic and acidic residues; it reads KRTEQDHYET. 2 positions are modified to phosphotyrosine: Tyr398 and Tyr402. Phosphothreonine; by PKC/PRKCH is present on residues Thr403 and Thr404. Ser408 carries the post-translational modification Phosphoserine. In terms of domain architecture, OCEL spans 414 to 522; sequence EDWIREYPPI…MVGDYDRQKT (109 aa). Residues 426–489 are a coiled coil; that stretch reads DQQRQLYKRN…EYNRLKQVKG (64 aa). Ser490 is modified (phosphoserine).

The protein belongs to the ELL/occludin family. As to quaternary structure, interacts with TJP1/ZO1. Interacts with VAPA. Interacts with CLDN1, CLDN6, CLDN9, CLDN11, CLDN12 and CLDN17. Interacts with PLSCR1. Interacts with LSR, ILDR1 and ILDR2. Interacts with TJP2/ZO2. In terms of processing, dephosphorylated by PTPRJ. The tyrosine phosphorylation on Tyr-398 and Tyr-402 reduces its ability to interact with TJP1. Phosphorylation at Ser-490 also attenuates the interaction with TJP1. Post-translationally, (Microbial infection) Cleaved by S.pyogenes SpeB protease; leading to its degradation. Degradation by SpeB promotes bacterial translocation across the host epithelial barrier. As to expression, localized at tight junctions of both epithelial and endothelial cells. Highly expressed in kidney. Not detected in testis.

Its subcellular location is the cell membrane. It localises to the cell junction. The protein localises to the tight junction. May play a role in the formation and regulation of the tight junction (TJ) paracellular permeability barrier. It is able to induce adhesion when expressed in cells lacking tight junctions. Functionally, (Microbial infection) Acts as a coreceptor for hepatitis C virus (HCV) in hepatocytes. In Homo sapiens (Human), this protein is Occludin (OCLN).